We begin with the raw amino-acid sequence, 487 residues long: Putative KilA-N domain-containing protein L37 (487 aa).

Residues 1–12 (MKVQKSSKKPLK) are compositionally biased toward basic residues. The tract at residues 1-137 (MKVQKSSKKP…DINSDDDNNL (137 aa)) is disordered. Low complexity predominate over residues 22-34 (KSGSKSMKSSKSS). Acidic residues-rich tracts occupy residues 47–77 (DSEISDNESFDSEISDSESSDNESSDNESSD) and 111–136 (VLDDESDDDNQSDNESSDINSDDDNN). Residues 175–284 (EISKGIYGTF…HKVSKIVNDY (110 aa)) enclose the KilA-N domain. Residues 290 to 338 (FDKHEQLIKGKDDKIAELTRKIDKQTSLMKDQKSTIKEQDKKINELLSK) adopt a coiled-coil conformation.

The chain is Putative KilA-N domain-containing protein L37 from Acanthamoeba polyphaga mimivirus (APMV).